The following is a 219-amino-acid chain: MOB kinase activator-like 1 (219 aa).

The Zn(2+) site is built by Cys-79, Cys-84, His-161, and His-166.

It belongs to the MOB1/phocein family. Interacts with and activates trc and wts. In terms of processing, phosphorylated by wts/mats kinase complex. Activated by phosphorylation by Hippo (Hpo) kinase which increases its affinity and its ability to activate Warts (Wts) kinase. Ubiquitously expressed at low levels in developing tissues (at protein level).

The protein localises to the cytoplasm. It localises to the cytoskeleton. It is found in the microtubule organizing center. Its subcellular location is the centrosome. The protein resides in the nucleus. The protein localises to the cytosol. It localises to the cell membrane. Functionally, coactivator of Warts (Wts) kinase in the Hippo/SWH (Sav/Wts/Hpo)signaling pathway, a signaling pathway that plays a pivotal role in organ size control and tumor suppression by restricting proliferation and promoting apoptosis. The core of this pathway is composed of a kinase cascade wherein Hippo (Hpo), in complex with its regulatory protein Salvador (Sav), phosphorylates and activates Warts (Wts) in complex with its regulatory protein Mats, which in turn phosphorylates and inactivates the Yorkie (Yki)oncoprotein. The Hippo/SWH signaling pathway inhibits the activity of the transcriptional complex formed by Scalloped (sd) and Yki and the target genes of this pathway include cyclin-E (cycE), diap1 and bantam. Mats is essential for early development and is required for proper chromosomal segregation in developing embryos. The sequence is that of MOB kinase activator-like 1 from Drosophila melanogaster (Fruit fly).